Consider the following 132-residue polypeptide: Small ribosomal subunit protein eS24 (132 aa).

Residues 90–100 (RLAKHGLYEKK) are compositionally biased toward basic and acidic residues. Positions 90 to 132 (RLAKHGLYEKKKTSRKQRKERKNRMKKVRGTAKANVGAGKKKD) are disordered. Residues 101-119 (KTSRKQRKERKNRMKKVRG) are compositionally biased toward basic residues.

The protein belongs to the eukaryotic ribosomal protein eS24 family. Component of the small ribosomal subunit. Part of the small subunit (SSU) processome, composed of more than 70 proteins and the RNA chaperone small nucleolar RNA (snoRNA) U3.

It localises to the cytoplasm. Its subcellular location is the nucleus. The protein resides in the nucleolus. Its function is as follows. Component of the small ribosomal subunit. The ribosome is a large ribonucleoprotein complex responsible for the synthesis of proteins in the cell. Required for processing of pre-rRNA and maturation of 40S ribosomal subunits. Part of the small subunit (SSU) processome, first precursor of the small eukaryotic ribosomal subunit. During the assembly of the SSU processome in the nucleolus, many ribosome biogenesis factors, an RNA chaperone and ribosomal proteins associate with the nascent pre-rRNA and work in concert to generate RNA folding, modifications, rearrangements and cleavage as well as targeted degradation of pre-ribosomal RNA by the RNA exosome. The chain is Small ribosomal subunit protein eS24 (rps24) from Xenopus laevis (African clawed frog).